The following is a 104-amino-acid chain: L-rhamnose mutarotase (104 aa).

Tyr18 provides a ligand contact to substrate. His22 functions as the Proton donor in the catalytic mechanism. Substrate is bound by residues Tyr41 and 76 to 77; that span reads WW.

This sequence belongs to the rhamnose mutarotase family. As to quaternary structure, homodimer.

The protein resides in the cytoplasm. The catalysed reaction is alpha-L-rhamnose = beta-L-rhamnose. It functions in the pathway carbohydrate metabolism; L-rhamnose metabolism. Its function is as follows. Involved in the anomeric conversion of L-rhamnose. The polypeptide is L-rhamnose mutarotase (Salmonella newport (strain SL254)).